Reading from the N-terminus, the 502-residue chain is Glycerol kinase (502 aa).

Position 14 (T14) interacts with ADP. ATP is bound by residues T14, T15, and S16. T14 is a binding site for sn-glycerol 3-phosphate. ADP is bound at residue R18. Positions 84, 85, and 136 each coordinate sn-glycerol 3-phosphate. Glycerol is bound by residues R84, E85, and Y136. H232 is subject to Phosphohistidine; by HPr. D246 lines the sn-glycerol 3-phosphate pocket. Residues D246 and Q247 each contribute to the glycerol site. The ADP site is built by T268 and G311. Positions 268, 311, 315, and 412 each coordinate ATP. The ADP site is built by G412 and N416.

The protein belongs to the FGGY kinase family. In terms of assembly, homotetramer and homodimer (in equilibrium). The phosphoenolpyruvate-dependent sugar phosphotransferase system (PTS), including enzyme I, and histidine-containing protein (HPr) are required for the phosphorylation, which leads to the activation of the enzyme.

It catalyses the reaction glycerol + ATP = sn-glycerol 3-phosphate + ADP + H(+). It participates in polyol metabolism; glycerol degradation via glycerol kinase pathway; sn-glycerol 3-phosphate from glycerol: step 1/1. Activated by phosphorylation and inhibited by fructose 1,6-bisphosphate (FBP). Functionally, key enzyme in the regulation of glycerol uptake and metabolism. Catalyzes the phosphorylation of glycerol to yield sn-glycerol 3-phosphate. The polypeptide is Glycerol kinase (Streptococcus pneumoniae (strain Hungary19A-6)).